We begin with the raw amino-acid sequence, 130 residues long: Small ribosomal subunit protein uS11c (130 aa).

This sequence belongs to the universal ribosomal protein uS11 family. In terms of assembly, part of the 30S ribosomal subunit.

The protein localises to the plastid. The protein resides in the chloroplast. The chain is Small ribosomal subunit protein uS11c from Tetradesmus obliquus (Green alga).